We begin with the raw amino-acid sequence, 584 residues long: MLSRVCPTLRYNRIWSAHAREMPRATLLLLQPNFFHSSPKTALVNRLDVTSSEFSSMFRRSFHALRSTVGDWRKLPKPPGQVFAERREYRKIRRRAPKKKQELELSVSICIEEQLPDDLEIQNIAEMLRLNVPMAMTLAFNGLKDSKYKTRETDIEDLGGYETVELSVMLCNDDFICKLNKEWRGEDHATDVLSMSQHVPELKLPVLMMGDLVISVETAARQAAERGHTLLDEIRILVIHGLLHLLGFDHEISDEAEQEMEEEEELLLKNLGWKGKGLIQSAYDIQKTTTVQPEKSDDRKEGDGLRLYKPKFSYIFCDMDGTLLNSKSQISEANAKALKEALLRGLKVVIATGKSRPGAIRILKTADLTGSDGIISESSPGVFVQGLLVYGRQGKEVYRGNLDRDVCRETCLYSLEHRIPLIAFSQDRCLTLFDHPLVDSLHTIYNEPKAEIISSVDQLIAEADIQKVIFMDTTEGVSSVIRPYWSEATGDRANVVQAQSDMLEIVPPGTSKGNGVKMLLNHLGVSPDEIMAIGDGENDIEMLQLASLGVALSNGAEKTKAVADVIGVSNDQDGVADAIYRYAF.

The transit peptide at 1-50 directs the protein to the chloroplast; sequence MLSRVCPTLRYNRIWSAHAREMPRATLLLLQPNFFHSSPKTALVNRLDVT. Zn(2+) contacts are provided by His-240, His-244, and His-250.

This sequence belongs to the endoribonuclease YbeY family. Zn(2+) is required as a cofactor.

It localises to the plastid. Its subcellular location is the chloroplast stroma. Its function is as follows. Endoribonuclease required for chloroplast ribosomal RNA (rRNA) processing and essential for normal growth and development. May be involved in maturation of both the 5' and 3' ends of 16S, 23S, and 4.5S rRNAs. Cleaves chloroplast rRNAs, mRNAs and tRNAs in vitro. This chain is Endoribonuclease YBEY, chloroplastic, found in Arabidopsis thaliana (Mouse-ear cress).